The primary structure comprises 598 residues: Elongation factor 4 2 (598 aa).

Residues 2–184 (KHIRNFCIIA…GIVKNLPAPK (183 aa)) enclose the tr-type G domain. GTP contacts are provided by residues 14–19 (DHGKST) and 131–134 (NKID).

Belongs to the TRAFAC class translation factor GTPase superfamily. Classic translation factor GTPase family. LepA subfamily.

The protein resides in the cell inner membrane. It carries out the reaction GTP + H2O = GDP + phosphate + H(+). Required for accurate and efficient protein synthesis under certain stress conditions. May act as a fidelity factor of the translation reaction, by catalyzing a one-codon backward translocation of tRNAs on improperly translocated ribosomes. Back-translocation proceeds from a post-translocation (POST) complex to a pre-translocation (PRE) complex, thus giving elongation factor G a second chance to translocate the tRNAs correctly. Binds to ribosomes in a GTP-dependent manner. This chain is Elongation factor 4 2, found in Rhodopirellula baltica (strain DSM 10527 / NCIMB 13988 / SH1).